The chain runs to 420 residues: Tryptophan synthase beta chain (420 aa).

Residue K99 is modified to N6-(pyridoxal phosphate)lysine.

The protein belongs to the TrpB family. Tetramer of two alpha and two beta chains. The cofactor is pyridoxal 5'-phosphate.

The enzyme catalyses (1S,2R)-1-C-(indol-3-yl)glycerol 3-phosphate + L-serine = D-glyceraldehyde 3-phosphate + L-tryptophan + H2O. It participates in amino-acid biosynthesis; L-tryptophan biosynthesis; L-tryptophan from chorismate: step 5/5. In terms of biological role, the beta subunit is responsible for the synthesis of L-tryptophan from indole and L-serine. In Helicobacter hepaticus (strain ATCC 51449 / 3B1), this protein is Tryptophan synthase beta chain.